Consider the following 392-residue polypeptide: Probable tRNA sulfurtransferase (392 aa).

Residues 59–166 enclose the THUMP domain; the sequence is SCYREALKRV…DEGLFIYTTE (108 aa). ATP contacts are provided by residues 186–187, 211–212, arginine 269, glycine 290, and glutamine 299; these read LL and YF.

Belongs to the ThiI family.

It is found in the cytoplasm. It carries out the reaction [ThiI sulfur-carrier protein]-S-sulfanyl-L-cysteine + a uridine in tRNA + 2 reduced [2Fe-2S]-[ferredoxin] + ATP + H(+) = [ThiI sulfur-carrier protein]-L-cysteine + a 4-thiouridine in tRNA + 2 oxidized [2Fe-2S]-[ferredoxin] + AMP + diphosphate. The enzyme catalyses [ThiS sulfur-carrier protein]-C-terminal Gly-Gly-AMP + S-sulfanyl-L-cysteinyl-[cysteine desulfurase] + AH2 = [ThiS sulfur-carrier protein]-C-terminal-Gly-aminoethanethioate + L-cysteinyl-[cysteine desulfurase] + A + AMP + 2 H(+). It functions in the pathway cofactor biosynthesis; thiamine diphosphate biosynthesis. Catalyzes the ATP-dependent transfer of a sulfur to tRNA to produce 4-thiouridine in position 8 of tRNAs, which functions as a near-UV photosensor. Also catalyzes the transfer of sulfur to the sulfur carrier protein ThiS, forming ThiS-thiocarboxylate. This is a step in the synthesis of thiazole, in the thiamine biosynthesis pathway. The sulfur is donated as persulfide by IscS. The polypeptide is Probable tRNA sulfurtransferase (Coxiella burnetii (strain RSA 493 / Nine Mile phase I)).